The chain runs to 170 residues: RNA pyrophosphohydrolase (170 aa).

The Nudix hydrolase domain maps to G6 to R150. Positions G39–G60 match the Nudix box motif.

Belongs to the Nudix hydrolase family. RppH subfamily. Requires a divalent metal cation as cofactor.

Its function is as follows. Accelerates the degradation of transcripts by removing pyrophosphate from the 5'-end of triphosphorylated RNA, leading to a more labile monophosphorylated state that can stimulate subsequent ribonuclease cleavage. This chain is RNA pyrophosphohydrolase, found in Cellvibrio japonicus (strain Ueda107) (Pseudomonas fluorescens subsp. cellulosa).